We begin with the raw amino-acid sequence, 364 residues long: MSRAARATVNLSALRANLRTARAAAPQQRIMAVIKSDGYGHGLAVVAGALTGHAEAFAVTDADEAEALRAAGFRERIVLLQGPFAVDDLARAAAADLELVIHAHWQVEALAQAQLASPVTVWLKVDSGMHRLGFPPEEVQDAWRRLTEASCVRADIGFLTHLACADDRDDPATERQLETFQAACDGLPGPRSAANSAGVLGWPASHYDWVRPGIMLYGASPFVDGRDEQPALQPAMAFQGRVVAVRHLRAGDPVGYGATWSCPEAMPVGVVSIGYGDGYPRHAPSGTPVEVAGQRTRLVGRISMDMLAVDLRGLDPVAEGDPAILWGGAVRAEEVAGACGTIAYELFCRMPPRVRREPVDGETL.

Lysine 35 acts as the Proton acceptor; specific for D-alanine in catalysis. Lysine 35 carries the post-translational modification N6-(pyridoxal phosphate)lysine. Arginine 131 contacts substrate. Catalysis depends on tyrosine 256, which acts as the Proton acceptor; specific for L-alanine. Methionine 304 is a substrate binding site.

Belongs to the alanine racemase family. Pyridoxal 5'-phosphate is required as a cofactor.

The catalysed reaction is L-alanine = D-alanine. Its pathway is amino-acid biosynthesis; D-alanine biosynthesis; D-alanine from L-alanine: step 1/1. Catalyzes the interconversion of L-alanine and D-alanine. May also act on other amino acids. The sequence is that of Alanine racemase (alr) from Halorhodospira halophila (strain DSM 244 / SL1) (Ectothiorhodospira halophila (strain DSM 244 / SL1)).